A 275-amino-acid chain; its full sequence is Large ribosomal subunit protein uL2cz (275 aa).

Disordered regions lie at residues 1-20 and 225-275; these read MAIH…AVDS and NPVD…RRSK.

The protein belongs to the universal ribosomal protein uL2 family. As to quaternary structure, part of the 50S ribosomal subunit.

It localises to the plastid. The protein resides in the chloroplast. This Populus alba (White poplar) protein is Large ribosomal subunit protein uL2cz (rpl2-A).